The sequence spans 273 residues: Pantothenate synthetase (273 aa).

27–34 (MGALHDGH) is an ATP binding site. The active-site Proton donor is the H34. Q58 lines the (R)-pantoate pocket. Q58 contributes to the beta-alanine binding site. An ATP-binding site is contributed by 144–147 (GKKD). Residue Q150 participates in (R)-pantoate binding. Residues V173 and 181–184 (LSSR) each bind ATP.

This sequence belongs to the pantothenate synthetase family. As to quaternary structure, homodimer.

Its subcellular location is the cytoplasm. The catalysed reaction is (R)-pantoate + beta-alanine + ATP = (R)-pantothenate + AMP + diphosphate + H(+). It functions in the pathway cofactor biosynthesis; (R)-pantothenate biosynthesis; (R)-pantothenate from (R)-pantoate and beta-alanine: step 1/1. Catalyzes the condensation of pantoate with beta-alanine in an ATP-dependent reaction via a pantoyl-adenylate intermediate. This chain is Pantothenate synthetase, found in Campylobacter curvus (strain 525.92).